Reading from the N-terminus, the 186-residue chain is Lumazine protein (186 aa).

Lumazine-binding repeat units follow at residues 1–96 and 97–186; these read MFRG…VGRG and GLTG…LNEW.

6,7-dimethyl-8-(1-D-ribityl)lumazine serves as cofactor.

In terms of biological role, antenna protein that modulates the color of the bioluminescence emission of the luciferase. In the presence of LumP, luciferase emission is shifted to higher energy values (shorter wavelength). This is Lumazine protein (lumP) from Photobacterium leiognathi.